Reading from the N-terminus, the 232-residue chain is Ribonuclease 3 (232 aa).

Residues 10–135 (ALKIYEATGY…LIGAMYMDGG (126 aa)) form the RNase III domain. E48 serves as a coordination point for Mg(2+). D52 is an active-site residue. Mg(2+) contacts are provided by N121 and E124. E124 is a catalytic residue. One can recognise a DRBM domain in the interval 161–230 (DPKTALQEWV…AKLMLKKITE (70 aa)).

It belongs to the ribonuclease III family. In terms of assembly, homodimer. The cofactor is Mg(2+).

It localises to the cytoplasm. It catalyses the reaction Endonucleolytic cleavage to 5'-phosphomonoester.. Digests double-stranded RNA. Involved in the processing of primary rRNA transcript to yield the immediate precursors to the large and small rRNAs (23S and 16S). Processes some mRNAs, and tRNAs when they are encoded in the rRNA operon. Processes pre-crRNA and tracrRNA of type II CRISPR loci if present in the organism. In Anaplasma marginale (strain St. Maries), this protein is Ribonuclease 3.